The primary structure comprises 91 residues: Pyruvate kinase (91 aa).

Arg48 lines the substrate pocket. K(+)-binding residues include Asn50, Ser52, Asp82, and Thr83. An ATP-binding site is contributed by 50 to 53 (NFSH). Arg89 is an ATP binding site.

Belongs to the pyruvate kinase family. In terms of assembly, homotetramer. Requires Mg(2+) as cofactor. It depends on K(+) as a cofactor.

The catalysed reaction is pyruvate + ATP = phosphoenolpyruvate + ADP + H(+). The protein operates within carbohydrate degradation; glycolysis; pyruvate from D-glyceraldehyde 3-phosphate: step 5/5. This chain is Pyruvate kinase, found in Leishmania braziliensis.